A 207-amino-acid chain; its full sequence is Protein lin-7 homolog B (207 aa).

The short motif at 1–13 is the Kinase interacting site element; the sequence is MAALVEPLGLERD. Positions 10 to 65 constitute an L27 domain; the sequence is LERDVSRAVELLERLQRSGELPPQKLQALQRVLQSRFCSAIREVYEQLYDTLDITG. Positions 93-175 constitute a PDZ domain; sequence VVELPKTDEG…SVKLVVRYTP (83 aa). The tract at residues 187–207 is disordered; it reads KMRSARRRQQHHSYSSLESRG. The span at 198 to 207 shows a compositional bias: polar residues; that stretch reads HSYSSLESRG.

It belongs to the lin-7 family. Forms two exclusive ternary complexes with CASK and CASKIN1. The brain-specific heterotrimeric complex (LIN-10-LIN-2-LIN-7 complex) composed of at least APBA1, CASK, and LIN7, associates with the motor protein KIF17 to transport vesicles along microtubules. Forms a heterotrimeric complex composed of MMP5, LIN7B and PATJ; the N-terminal L27 domain of PALS1 interacts with the L27 domain of PATJ and the C-terminal L27 domain of PALS1 interacts with the L27 domain of LIN7B. Forms a heterotrimeric complex with DLG1 and CASK via their L27 domains. Interacts with DLG4 and GRIN2B as well as CDH1 and CTNNB1, the channels KCNJ12/Kir2.2, KCNJ4/Kir2.3 and probably KCNJ2/Kir2.1 and SLC6A12/BGT-1 via its PDZ domain. The association of LIN7A with cadherin and beta-catenin is calcium-dependent, occurs at synaptic junctions and requires the actin cytoskeleton. Interacts with EGFR, ERBB2, ERBB3 and ERBB4 with both PDZ and KID domains. Associates with KIF17 via APBA1. Interacts with ASIC3. Interacts with TOPK. Interacts with RTKN. Interacts with APBA1. Interacts with MPP7. Interacts with DLG2. Interacts with DLG3. In terms of tissue distribution, expressed only in brain.

It localises to the cell membrane. The protein localises to the basolateral cell membrane. It is found in the cell junction. The protein resides in the postsynaptic density membrane. Its subcellular location is the tight junction. Plays a role in establishing and maintaining the asymmetric distribution of channels and receptors at the plasma membrane of polarized cells. Forms membrane-associated multiprotein complexes that may regulate delivery and recycling of proteins to the correct membrane domains. The tripartite complex composed of LIN7 (LIN7A, LIN7B or LIN7C), CASK and APBA1 associates with the motor protein KIF17 to transport vesicles containing N-methyl-D-aspartate (NMDA) receptor subunit NR2B along microtubules. This complex may have the potential to couple synaptic vesicle exocytosis to cell adhesion in brain. Ensures the proper localization of GRIN2B (subunit 2B of the NMDA receptor) to neuronal postsynaptic density and may function in localizing synaptic vesicles at synapses where it is recruited by beta-catenin and cadherin. Required to localize Kir2 channels, GABA transporter (SLC6A12) and EGFR/ERBB1, ERBB2, ERBB3 and ERBB4 to the basolateral membrane of epithelial cells. May increase the amplitude of ASIC3 acid-evoked currents by stabilizing the channel at the cell surface. The sequence is that of Protein lin-7 homolog B (Lin7b) from Rattus norvegicus (Rat).